We begin with the raw amino-acid sequence, 1507 residues long: Histone-lysine N-methyltransferase set-2 (1507 aa).

The disordered stretch occupies residues 1–32; the sequence is MSTHDMNHHPPRKSHSKRDKPSSSNSGPKIEN. Positions 9-18 are enriched in basic residues; it reads HPPRKSHSKR. The RRM domain maps to 128–199; it reads VSLFNMDDNC…QNLLATKCTP (72 aa). Disordered stretches follow at residues 280–578, 650–697, 803–826, 842–1058, and 1163–1199; these read DYTM…QPQM, EPFS…EEPA, DEEK…SNHL, SSRG…GPII, and QKPR…FKPR. Over residues 296-315 the composition is skewed to pro residues; sequence PIPPPPIKEESPPPPPPPPV. A compositionally biased stretch (low complexity) spans 316 to 327; that stretch reads ASVSNLAPVPSV. Positions 331–342 are enriched in polar residues; it reads YYNNIQPSSSTM. Positions 413–444 are enriched in basic and acidic residues; sequence VKYETYKMEKRKIKYEGGNKKYEQVHIKERTA. A compositionally biased stretch (low complexity) spans 456–465; sequence SSESASGSSS. Over residues 478–488 the composition is skewed to basic residues; the sequence is KKKKRPKSPNR. The span at 566 to 575 shows a compositional bias: polar residues; sequence HLQTPYQHVQ. Composition is skewed to basic and acidic residues over residues 668–680 and 803–823; these read DVGR…KPSL and DEEK…EKPS. Over residues 846–868 the composition is skewed to basic residues; the sequence is FYRKQKPIPKSHPKHQEHHHHAK. Residues 869–908 show a composition bias toward low complexity; it reads ASVSTPVHSSSTSRNSSVAPTPQRTVSTSSSSSSAATSAR. The segment covering 941 to 951 has biased composition (polar residues); it reads SFSSTSIQSSP. The segment covering 958–971 has biased composition (low complexity); that stretch reads SSSSRTSSSSSTSS. Basic and acidic residues predominate over residues 973–982; the sequence is KQEETADEKS. Positions 990 to 1007 are enriched in low complexity; it reads SSDESSTTGSTATSVVSS. The segment covering 1015–1047 has biased composition (basic and acidic residues); sequence QQEKTDGEPPKKKSQTDFISERVSKIEGEERPL. Residues 1179–1190 show a composition bias toward pro residues; it reads EPPPTKRPAPPP. Residues 1340–1345 carry the RxxxRR motif motif; it reads RLLQRR. The SET domain occupies 1368–1485; it reads KMIKFARSRI…KGEEITYDYK (118 aa). Residue Tyr1484 coordinates S-adenosyl-L-methionine. The 17-residue stretch at 1491–1507 folds into the Post-SET domain; that stretch reads DKIDCLCGAKTCRGYLN.

The protein belongs to the class V-like SAM-binding methyltransferase superfamily. As to quaternary structure, component of the Set1C/COMPASS complex (also known as the SET2 complex), which contains at least set-2, swd-2.1, cfp-1, rbbp-5, wdr-5.1, dpy-30 and ash-2. In terms of tissue distribution, expressed in all cells of embryo. In L1 larva, it is predominantly expressed in Z2 and Z3 primordial germ cells. In adults, it is predominantly expressed in the germline.

It is found in the nucleus. It carries out the reaction L-lysyl(4)-[histone H3] + 3 S-adenosyl-L-methionine = N(6),N(6),N(6)-trimethyl-L-lysyl(4)-[histone H3] + 3 S-adenosyl-L-homocysteine + 3 H(+). It catalyses the reaction N(6)-methyl-L-lysyl(4)-[histone H3] + S-adenosyl-L-methionine = N(6),N(6)-dimethyl-L-lysyl(4)-[histone H3] + S-adenosyl-L-homocysteine + H(+). The catalysed reaction is N(6),N(6)-dimethyl-L-lysyl(4)-[histone H3] + S-adenosyl-L-methionine = N(6),N(6),N(6)-trimethyl-L-lysyl(4)-[histone H3] + S-adenosyl-L-homocysteine + H(+). Functionally, catalytic component of the COMPASS (Set1C) complex that specifically mono-, di- and trimethylates histone H3 to form H3K4me1/2/3. Binds RNAs which might negatively affect its histone methyltransferase activity. COMPASS recognizes ubiquitinated H2B on one face of the nucleosome which stimulates the methylation of H3 on the opposing face. H3 'Lys-4' methylation represents a specific tag for epigenetic transcriptional activation. Implicated in the epigenetic inheritance of lifespan over several generations. Acts in the germline to limit the longevity of the soma, probably by regulating a lipid metabolism pathway that signals from the germline to the intestine, thereby preventing accumulation of mono-unsaturated fatty acids. Methylation in the germline is required for germline development and fertility, possibly by ensuring genome stability. May act redundantly with mes-3 and mes-4 proteins in the development of a fertile germline. Required for RNAi. Functions as an antagonist of hpl-1 and hpl-2 activity in growth and somatic gonad development. Cooperates with jmjd-3.1 and egl-27 to ensure robust transdifferentiation of the Y rectal cell to the PDA motor neuron during larval development. The polypeptide is Histone-lysine N-methyltransferase set-2 (set-2) (Caenorhabditis elegans).